The following is a 270-amino-acid chain: L-fucose dehydrogenase (270 aa).

Residues R19, I21, D40, K41, D62, V63, N89, Y154, K158, I187, T189, and L191 each coordinate NAD(+). Y154 (proton acceptor) is an active-site residue.

The protein belongs to the short-chain dehydrogenases/reductases (SDR) family. In terms of assembly, homotetramer. As to expression, detected in retina.

It is found in the cytoplasm. The catalysed reaction is L-fucose + NAD(+) = L-fucono-1,5-lactone + NADH + H(+). It catalyses the reaction D-arabinose + NAD(+) = D-arabinono-1,5-lactone + NADH + H(+). It carries out the reaction L-galactose + NAD(+) = L-galactono-1,5-lactone + NADH + H(+). It functions in the pathway carbohydrate degradation; L-fucose degradation. In terms of biological role, catalyzes the NAD(+)-dependent oxidation of L-fucose, yielding L-fucono-1,5-lactone, which rapidly converts spontaneously to L-fucone-1,4-lactone. Can also act on D-arabinose and L-galactose, with lower catalytic efficiency. Does not use NADPH. May be the initial enzyme of the putative L-fucose degradation pathway in mammals. This Bos taurus (Bovine) protein is L-fucose dehydrogenase (HSD17B14).